Reading from the N-terminus, the 886-residue chain is Alanine--tRNA ligase (886 aa).

The Zn(2+) site is built by His-564, His-568, Cys-676, and His-680.

Belongs to the class-II aminoacyl-tRNA synthetase family. Zn(2+) is required as a cofactor.

It is found in the cytoplasm. It carries out the reaction tRNA(Ala) + L-alanine + ATP = L-alanyl-tRNA(Ala) + AMP + diphosphate. Its function is as follows. Catalyzes the attachment of alanine to tRNA(Ala) in a two-step reaction: alanine is first activated by ATP to form Ala-AMP and then transferred to the acceptor end of tRNA(Ala). Also edits incorrectly charged Ser-tRNA(Ala) and Gly-tRNA(Ala) via its editing domain. The polypeptide is Alanine--tRNA ligase (Bartonella bacilliformis (strain ATCC 35685 / KC583 / Herrer 020/F12,63)).